The chain runs to 1211 residues: Diacylglycerol kinase 1 (1211 aa).

The tract at residues 174–244 (HHSLGGHLSH…RNSSKKSSNS (71 aa)) is disordered. Positions 197–230 (VTPSPLASGPSMFQASNPARRSVDSSPSHSATNH) are enriched in polar residues. The segment covering 231–244 (SQMSRNSSKKSSNS) has biased composition (low complexity). EF-hand domains are found at residues 286 to 321 (RPED…MMAV) and 331 to 366 (ELRP…TIPL). Ca(2+) is bound by residues Asp299, Asp301, Asn303, Glu310, Asp344, Asp346, Asp348, Thr350, and Glu355. Phorbol-ester/DAG-type zinc fingers lie at residues 382 to 432 (IHVW…PASC) and 449 to 498 (LHHW…KKEC). The region spanning 548 to 682 (ELSCPLLVFV…LDRWSIEVTN (135 aa)) is the DAGKc domain. 3 disordered regions span residues 789-841 (TLRT…ETEK), 874-893 (AATA…QRNK), and 910-958 (DHED…QQQQ). Positions 795–805 (SSSSSNTSSGS) are enriched in low complexity. Basic and acidic residues predominate over residues 826 to 841 (DVREKSVPRRSGETEK). A compositionally biased stretch (polar residues) spans 879–893 (PVGSNQSDNSSQRNK). Residues 931 to 958 (NSIPATPATPITPTTPNAASSVLQQQQQ) are compositionally biased toward low complexity.

Belongs to the eukaryotic diacylglycerol kinase family. In 10-11 hours embryos, expression is abundant in a limited number of cells in the procephalic region and in the ventral nerve cord. Predominantly expressed in the adult nervous system and muscle: including compound eyes, brain cortex, fibrillar muscle, and tubular muscle.

It carries out the reaction a 1,2-diacyl-sn-glycerol + ATP = a 1,2-diacyl-sn-glycero-3-phosphate + ADP + H(+). Upon cell stimulation converts the second messenger diacylglycerol into phosphatidate, initiating the resynthesis of phosphatidylinositols and attenuating protein kinase C activity. May have a role in the development of the embryonic nervous system and the function of the adult nervous system and muscle; regulating signal transduction in neurons. This Drosophila melanogaster (Fruit fly) protein is Diacylglycerol kinase 1 (Dgk).